The primary structure comprises 309 residues: Carbonic anhydrase 4 (309 aa).

An N-terminal signal peptide occupies residues 1 to 17; that stretch reads MQLLLALLALAYVAPST. Residues 20–282 enclose the Alpha-carbonic anhydrase domain; sequence SHWCYEIQAK…LGNRQVFRSH (263 aa). Disulfide bonds link cysteine 23/cysteine 35 and cysteine 45/cysteine 226. Histidine 87 functions as the Proton donor/acceptor in the catalytic mechanism. Residues histidine 114, histidine 116, and histidine 139 each contribute to the Zn(2+) site. Residue asparagine 193 is glycosylated (N-linked (GlcNAc...) asparagine). 222–223 is a substrate binding site; that stretch reads TT. Serine 281 carries GPI-anchor amidated serine lipidation. Residues 282–309 constitute a propeptide, removed in mature form; it reads HASGRLLSLPLPTLLVPTLTCLVASFLH.

Belongs to the alpha-carbonic anhydrase family. As to quaternary structure, interacts with SLC4A4. Zn(2+) is required as a cofactor. In terms of processing, the N-terminus is blocked. Glycosylated. In terms of tissue distribution, present in kidney and lung. Also particularly abundant in brain, muscle, heart and liver. Not detected in skin or spleen.

The protein localises to the cell membrane. The enzyme catalyses hydrogencarbonate + H(+) = CO2 + H2O. With respect to regulation, inhibited by acetazolamide. Its function is as follows. Catalyzes the reversible hydration of carbon dioxide into bicarbonate and protons and thus is essential to maintaining intracellular and extracellular pH. May stimulate the sodium/bicarbonate transporter activity of SLC4A4 that acts in pH homeostasis. It is essential for acid overload removal from the retina and retina epithelium, and acid release in the choriocapillaris in the choroid. The polypeptide is Carbonic anhydrase 4 (Ca4) (Rattus norvegicus (Rat)).